The chain runs to 439 residues: MENQKNFLTTAPYKGTRDFYPEDMRLRNWMFSVMRETVLSFGYEEYDGPILESFDLYKAKSGEEIVERQLYDFIDKGERRVAIRPEMTPTLARMVAGNLRNLPKPVRWFSIPNLWRYEQPGKGRLREHWQLNVDLFGVDSHRAELEILLIADSILKKFGAPIGSYQIKVSHRKLLDSFLKNSLKLNGDQVHGVSKLLDKKSKISSEAFETEMKPFLNNFKEQFSLIETYLNSNLETVSKIPGIDTNSVSFIQNLFQELGELGIDKQLLFDPSIIRGFDYYTGCIFEVFDTNPENRRSLYGGGRYDNLIGLFSKEQLSGIGFGLGDVTLKNFLEGHNLIPNLSREKTIFLPIMDESLFVDTFKLSKELRENEILTETMLDSAKIGKQIQIAEKKGYRYVLFLGESEIRTETVQIKDLISGEQKSLPRKGLSDTLKKDFQL.

This sequence belongs to the class-II aminoacyl-tRNA synthetase family. As to quaternary structure, homodimer.

Its subcellular location is the cytoplasm. The catalysed reaction is tRNA(His) + L-histidine + ATP = L-histidyl-tRNA(His) + AMP + diphosphate + H(+). The protein is Histidine--tRNA ligase of Leptospira interrogans serogroup Icterohaemorrhagiae serovar copenhageni (strain Fiocruz L1-130).